The primary structure comprises 601 residues: ATP-dependent rRNA helicase SPB4 (601 aa).

The Q motif signature appears at 14–42; the sequence is LAWSQASLQPWIHDAIDSLGFRSMTPVQA. Residues 45-228 enclose the Helicase ATP-binding domain; that stretch reads IPLFCGNKDV…RTGMSNPVKI (184 aa). 58–65 contacts ATP; it reads AVTGSGKT. The DEAD box signature appears at 176–179; it reads DEAD. Positions 257-419 constitute a Helicase C-terminal domain; sequence VLINMLSTLQ…AYKAFSKNLR (163 aa). Positions 507–575 form a coiled coil; that stretch reads KEKIRLETME…QIMNESSDEE (69 aa). The segment covering 532 to 554 has biased composition (basic and acidic residues); it reads LKVKNEAWSSKNEKKEGKQERRE. Residues 532–576 are disordered; it reads LKVKNEAWSSKNEKKEGKQERREKMKRKREAIEKQIMNESSDEET.

The protein belongs to the DEAD box helicase family. DDX55/SPB4 subfamily. Component of pre-60S ribosomal complexes.

The protein localises to the nucleus. Its subcellular location is the nucleolus. The enzyme catalyses ATP + H2O = ADP + phosphate + H(+). ATP-binding RNA helicase involved in the biogenesis of 60S ribosomal subunits. Binds 90S pre-ribosomal particles and dissociates from pre-60S ribosomal particles after processing of 27SB pre-rRNA. Required for the normal formation of 18S rRNA through the processing of pre-rRNAs at sites A0, A1 and A2, and the normal formation of 25S and 5.8S rRNAs through the processing of pre-rRNAs at sites C1 and C2. This Meyerozyma guilliermondii (strain ATCC 6260 / CBS 566 / DSM 6381 / JCM 1539 / NBRC 10279 / NRRL Y-324) (Yeast) protein is ATP-dependent rRNA helicase SPB4.